Reading from the N-terminus, the 906-residue chain is Catenin alpha-1 (906 aa).

T2 carries the N-acetylthreonine modification. An involved in homodimerization region spans residues 2 to 228 (TAVHAGNINF…PILYTASQAC (227 aa)). Residue K57 forms a Glycyl lysine isopeptide (Lys-Gly) (interchain with G-Cter in SUMO2) linkage. The interval 97 to 148 (VRKQGDLMKAAAGEFADDPCSSVKRGNMVRAARALLSAVTRLLILADMADVY) is interaction with JUP and CTNNB1. 4 positions are modified to phosphoserine: S264, S268, S295, and S297. The interaction with alpha-actinin stretch occupies residues 325–394 (TRDDRRERIV…AVMDHVSDSF (70 aa)). T634 carries the post-translational modification Phosphothreonine. Residue S641 is modified to Phosphoserine; by CK2. T645 is subject to Phosphothreonine. S652 and S655 each carry phosphoserine; by CK1. T658 bears the Phosphothreonine; by CK1 mark. K797 participates in a covalent cross-link: Glycyl lysine isopeptide (Lys-Gly) (interchain with G-Cter in SUMO2). Residue S851 is modified to Phosphoserine. The segment covering 864 to 880 (PEKKPLVKREKQDETQT) has biased composition (basic and acidic residues). The disordered stretch occupies residues 864–894 (PEKKPLVKREKQDETQTKIKRASQKKHVNPV). Basic residues predominate over residues 881 to 891 (KIKRASQKKHV).

It belongs to the vinculin/alpha-catenin family. Monomer and homodimer; the monomer preferentially binds to CTNNB1 and the homodimer to actin. Component of an cadherin:catenin adhesion complex composed of at least of CDH26, beta-catenin/CTNNB1, alpha-catenin/CTNNA1 and p120 catenin/CTNND1. Possible component of an E-cadherin/ catenin adhesion complex together with E-cadherin/CDH1 and beta-catenin/CTNNB1 or gamma-catenin/JUP; the complex is located to adherens junctions. The stable association of CTNNA1 is controversial as CTNNA1 was shown not to bind to F-actin when assembled in the complex. Alternatively, the CTNNA1-containing complex may be linked to F-actin by other proteins such as LIMA1. Binds AFDN and F-actin. Interacts with ARHGAP21. Interacts with AJUBA. Interacts with LIMA1. Interacts with vinculin/VCL. Interacts with TJP2/ZO2 (via N-terminus). Interacts with TJP1/ZO1 (via N-terminus). Sumoylated. Post-translationally, phosphorylation seems to contribute to the strength of cell-cell adhesion rather than to the basic capacity for cell-cell adhesion. In terms of tissue distribution, ubiquitously expressed in normal tissues. Abundantly expressed in brain and cerebellum, also expressed in the placenta, liver, lung, colon, heart, pancreas, stomach and thymus.

The protein localises to the cytoplasm. It localises to the cytoskeleton. Its subcellular location is the cell junction. The protein resides in the adherens junction. It is found in the cell membrane. The protein localises to the nucleus. Its function is as follows. Associates with the cytoplasmic domain of a variety of cadherins. The association of catenins to cadherins produces a complex which is linked to the actin filament network, and which seems to be of primary importance for cadherins cell-adhesion properties. Can associate with both E- and N-cadherins. Originally believed to be a stable component of E-cadherin/catenin adhesion complexes and to mediate the linkage of cadherins to the actin cytoskeleton at adherens junctions. In contrast, cortical actin was found to be much more dynamic than E-cadherin/catenin complexes and CTNNA1 was shown not to bind to F-actin when assembled in the complex suggesting a different linkage between actin and adherens junctions components. The homodimeric form may regulate actin filament assembly and inhibit actin branching by competing with the Arp2/3 complex for binding to actin filaments. Involved in the regulation of WWTR1/TAZ, YAP1 and TGFB1-dependent SMAD2 and SMAD3 nuclear accumulation. May play a crucial role in cell differentiation. In Homo sapiens (Human), this protein is Catenin alpha-1.